The chain runs to 248 residues: Ureidoacrylate amidohydrolase RutB (248 aa).

The active-site Proton acceptor is the D41. The active site involves K150. The active-site Nucleophile is the C183.

This sequence belongs to the isochorismatase family. RutB subfamily.

The enzyme catalyses (Z)-3-ureidoacrylate + H2O + H(+) = (Z)-3-aminoacrylate + NH4(+) + CO2. It carries out the reaction (Z)-3-ureidoacrylate + H2O = (Z)-3-aminoacrylate + carbamate + H(+). The catalysed reaction is (Z)-2-methylureidoacrylate + H2O + H(+) = (Z)-2-methylaminoacrylate + NH4(+) + CO2. Hydrolyzes ureidoacrylate to form aminoacrylate and carbamate. The carbamate hydrolyzes spontaneously, thereby releasing one of the nitrogen atoms of the pyrimidine ring as ammonia and one of its carbon atoms as CO2. This is Ureidoacrylate amidohydrolase RutB from Methylorubrum extorquens (strain ATCC 14718 / DSM 1338 / JCM 2805 / NCIMB 9133 / AM1) (Methylobacterium extorquens).